The primary structure comprises 347 residues: NADH-ubiquinone oxidoreductase chain 2 (347 aa).

Helical transmembrane passes span 3 to 23, 25 to 45, 60 to 80, 96 to 116, 122 to 142, 153 to 173, 178 to 198, 200 to 220, 237 to 257, 274 to 294, and 323 to 343; these read PPIL…VLTS, HWLL…PILM, FLTQ…NLMF, GLVT…FWVP, ISLS…LSIL, LLIT…LNQT, ILAY…TYNP, LMIL…MLFM, LPLM…LPPL, DMII…YFYM, and IILL…TPMM.

Belongs to the complex I subunit 2 family. Core subunit of respiratory chain NADH dehydrogenase (Complex I) which is composed of 45 different subunits. Interacts with TMEM242.

It is found in the mitochondrion inner membrane. It carries out the reaction a ubiquinone + NADH + 5 H(+)(in) = a ubiquinol + NAD(+) + 4 H(+)(out). Its function is as follows. Core subunit of the mitochondrial membrane respiratory chain NADH dehydrogenase (Complex I) which catalyzes electron transfer from NADH through the respiratory chain, using ubiquinone as an electron acceptor. Essential for the catalytic activity and assembly of complex I. The protein is NADH-ubiquinone oxidoreductase chain 2 of Halichoerus grypus (Gray seal).